A 411-amino-acid chain; its full sequence is Inhibin beta B chain (411 aa).

An N-terminal signal peptide occupies residues 1–28; the sequence is MDGLPGRALGAACLLLLVAGWLGPEAWG. The disordered stretch occupies residues 28–69; it reads GSPTPPPSPAAPPPPPPPGAPGGSQDTCTSCGGGGGGFRRPE. Positions 29-296 are excised as a propeptide; that stretch reads SPTPPPSPAA…GDSRHRIRKR (268 aa). Positions 30 to 47 are enriched in pro residues; sequence PTPPPSPAAPPPPPPPGA. N-linked (GlcNAc...) asparagine glycosylation occurs at Asn97. Disulfide bonds link Cys300-Cys308, Cys307-Cys376, Cys336-Cys408, and Cys340-Cys410.

This sequence belongs to the TGF-beta family. As to quaternary structure, dimeric, linked by one or more disulfide bonds. Inhibin B is a dimer of alpha and beta-B. Activin B is a homodimer of beta-B. Activin AB is a dimer of beta-A and beta-B. Interacts with FST and FSTL3. Activin B interacts with BMPR2. As to expression, uterus, testis, ovary, lung, kidney, brain, CJ7 embryonic stem cells, and possibly in liver.

It is found in the secreted. Its function is as follows. Inhibins and activins inhibit and activate, respectively, the secretion of follitropin by the pituitary gland. Inhibins/activins are involved in regulating a number of diverse functions such as hypothalamic and pituitary hormone secretion, gonadal hormone secretion, germ cell development and maturation, erythroid differentiation, insulin secretion, nerve cell survival, embryonic axial development or bone growth, depending on their subunit composition. Inhibins appear to oppose the functions of activins. Activin B is a dimer of alpha and beta-B that plays a role in several essential biological processes including embryonic development, stem cell maintenance and differentiation, haematopoiesis, cell proliferation and wound healing. Signals through type I receptor ACVR1C, abundantly expressed in pancreatic beta cells, and type II receptors like ACVR2A. Upon ligand binding, these receptors phosphorylate intracellular signaling mediators SMAD2 and SMAD3, which form a complex with SMAD4, translocate to the nucleus, and regulate gene expression. Plays a crucial role in the induction of hepcidin by inflammation through activation of ACVR1C and subsequent phosphorylation of SMAD1/5/8. Regulates adipocyte lipid metabolism by decreasing non-esterified fatty acids and glycerol release and increases intracellular triglyceride content. Stimulates wound healing by promoting cell migration and hair follicle regeneration through the JNK and ERK signaling pathways downstream of RHOA. In terms of biological role, inhibin B is a dimer of alpha and beta-B that plays a crucial role in the regulation of the reproductive system by inhibiting the secretion of follicle-stimulating hormone (FSH) from the anterior pituitary gland. Thereby, maintains reproductive homeostasis in both males and females. Acts as a more potent suppressor of FSH release than inhibin A. Functions as competitive receptor antagonist binding activin type II receptors with high affinity in the presence of the TGF-beta type III coreceptor/TGFBR3L. In Mus musculus (Mouse), this protein is Inhibin beta B chain (Inhbb).